Here is a 432-residue protein sequence, read N- to C-terminus: Glutamate-1-semialdehyde 2,1-aminomutase (432 aa).

Lys-269 carries the post-translational modification N6-(pyridoxal phosphate)lysine.

Belongs to the class-III pyridoxal-phosphate-dependent aminotransferase family. HemL subfamily. As to quaternary structure, homodimer. Pyridoxal 5'-phosphate serves as cofactor.

The protein localises to the cytoplasm. It catalyses the reaction (S)-4-amino-5-oxopentanoate = 5-aminolevulinate. It participates in porphyrin-containing compound metabolism; protoporphyrin-IX biosynthesis; 5-aminolevulinate from L-glutamyl-tRNA(Glu): step 2/2. In Desulforudis audaxviator (strain MP104C), this protein is Glutamate-1-semialdehyde 2,1-aminomutase.